The primary structure comprises 404 residues: Tryptophan synthase beta chain (404 aa).

K98 carries the N6-(pyridoxal phosphate)lysine modification.

This sequence belongs to the TrpB family. In terms of assembly, tetramer of two alpha and two beta chains. It depends on pyridoxal 5'-phosphate as a cofactor.

It carries out the reaction (1S,2R)-1-C-(indol-3-yl)glycerol 3-phosphate + L-serine = D-glyceraldehyde 3-phosphate + L-tryptophan + H2O. Its pathway is amino-acid biosynthesis; L-tryptophan biosynthesis; L-tryptophan from chorismate: step 5/5. Its function is as follows. The beta subunit is responsible for the synthesis of L-tryptophan from indole and L-serine. The polypeptide is Tryptophan synthase beta chain (Rhodopseudomonas palustris (strain ATCC BAA-98 / CGA009)).